The chain runs to 1259 residues: Cingulin (1259 aa).

The interval 9–324 (MADQPIPVGQ…EKFPSLQAQP (316 aa)) is head. Positions 41–55 (QDSYGVAVRVQGIDG) match the ZIM motif. A compositionally biased stretch (basic and acidic residues) spans 69–79 (SSYDYDRHYSE). Disordered regions lie at residues 69–151 (SSYD…IDTK), 169–232 (VRGR…RQSL), 317–338 (FPSLQAQPGEDTRSLGSQKKEL), 941–969 (KSRREIGEAQKQAKEKTAEAERHQFNSSR), and 1192–1259 (REME…TSSC). Over residues 80 to 100 (RSSTLDTAYSQSSRESAWSRG) the composition is skewed to polar residues. Over residues 117–127 (SATSQQSTSAS) the composition is skewed to low complexity. Over residues 128 to 145 (NKTNKNGLSTSSFSNQSS) the composition is skewed to polar residues. Residues 179–204 (ALKDERKRSQSLDGRKNYQDTADSRE) are compositionally biased toward basic and acidic residues. The span at 220 to 229 (VSSANRSFAR) shows a compositional bias: polar residues. Positions 325-1218 (GEDTRSLGSQ…KTMEKESKRK (894 aa)) form a coiled coil. Positions 326–338 (EDTRSLGSQKKEL) are enriched in basic and acidic residues. Positions 1220–1259 (IRPAHNDDDDLSSDGEYGGSYDPSSITSLLTESNLQTSSC) are tail. Positions 1241–1259 (DPSSITSLLTESNLQTSSC) are enriched in polar residues.

This sequence belongs to the cingulin family. In terms of assembly, parallel homodimer. Interacts with TJP1/ZO1 and TJP2/ZO2.

Its subcellular location is the cell junction. It is found in the tight junction. Functionally, probably plays a role in the formation and regulation of the tight junction (TJ) paracellular permeability barrier, possibly by linking ZO proteins to the actomyosin cytoskeleton. This Xenopus tropicalis (Western clawed frog) protein is Cingulin.